Consider the following 34-residue polypeptide: IRCSGSRDCYSPCMKQTGCPNAKCINKSCKCYGC.

Intrachain disulfides connect Cys3–Cys24, Cys9–Cys29, Cys13–Cys31, and Cys19–Cys34. Cys34 is subject to Cysteine amide.

It belongs to the short scorpion toxin superfamily. Potassium channel inhibitor family. Alpha-KTx 06 subfamily. As to expression, expressed by the venom gland.

The protein resides in the secreted. Antagonist of Kv1/KCNA potassium channels. Shows a weak interaction with muscle-type nicotinic acetylcholine receptors (nAChR), since it inhibits alpha-bungarotoxin binding to both muscle-type nAChR from T.californica (IC(50)=490 nM). This suggests it probably weakly inhibits nAChR. The protein is Potassium channel toxin alpha-KTx 6.13 of Heterometrus spinifer (Asia giant forest scorpion).